Reading from the N-terminus, the 267-residue chain is Tryptophan synthase alpha chain (267 aa).

Active-site proton acceptor residues include E47 and D58.

This sequence belongs to the TrpA family. Tetramer of two alpha and two beta chains.

It carries out the reaction (1S,2R)-1-C-(indol-3-yl)glycerol 3-phosphate + L-serine = D-glyceraldehyde 3-phosphate + L-tryptophan + H2O. It participates in amino-acid biosynthesis; L-tryptophan biosynthesis; L-tryptophan from chorismate: step 5/5. Functionally, the alpha subunit is responsible for the aldol cleavage of indoleglycerol phosphate to indole and glyceraldehyde 3-phosphate. The polypeptide is Tryptophan synthase alpha chain (Chlorobium phaeovibrioides (strain DSM 265 / 1930) (Prosthecochloris vibrioformis (strain DSM 265))).